The following is a 362-amino-acid chain: Protein U8 (362 aa).

Belongs to the herpesviridae US22 family.

The chain is Protein U8 (U8) from Human herpesvirus 7 (strain JI) (HHV-7).